Reading from the N-terminus, the 1146-residue chain is Lysine-specific demethylase 2A (1146 aa).

The JmjC domain occupies 146 to 314; that stretch reads FSHTKLENLV…MQLRIYSIED (169 aa). A substrate-binding site is contributed by T207. The Fe cation site is built by H210 and D212. A substrate-binding site is contributed by K227. H282 lines the Fe cation pocket. 2 disordered regions span residues 363 to 467 and 554 to 585; these read LNGR…PDSP and TKPH…SSGA. Residues 373–387 show a composition bias toward low complexity; the sequence is SSSSSSSSSGLSSSS. A compositionally biased stretch (acidic residues) spans 388-401; that stretch reads DNDDSSDQDWEEEE. The segment covering 402–442 has biased composition (basic and acidic residues); that stretch reads GLRKRERDRCRVERELQRKRNRDRQQRDQERDRHGRTERII. Residues 453-467 show a composition bias toward pro residues; sequence LTPPPSLPLPTPDSP. A compositionally biased stretch (low complexity) spans 566–584; it reads STAPPRTSGTPSGTTASSG. Residues 585-631 form a CXXC-type zinc finger; it reads ARRRRVRCRKCQACVQRECGTCHYCKDMKKFGGPGRMKQSCVLRQCL. Residues C592, C595, C598, C603, C606, C609, C625, and C630 each contribute to the Zn(2+) site. The segment at 638–699 adopts a PHD-type zinc-finger fold; it reads SVTCALCGEV…YWECPKCYEG (62 aa). Disordered stretches follow at residues 733 to 800 and 832 to 867; these read VLRP…EGDR and TPNP…ENVM. Positions 739–762 are enriched in pro residues; sequence GQSPPSPPLLLLPPSPSSAPPTPP. The segment covering 772–789 has biased composition (basic and acidic residues); the sequence is SREERAKRRQLAREKENH. Residues 849–864 are compositionally biased toward acidic residues; it reads EREEEEEEEEEEEETE. The F-box domain maps to 874 to 919; it reads STSMQKDVWLSVFHYLTHEELCICMRVCKAWYKWGCDKRLWSRIDV. LRR repeat units lie at residues 945–966, 968–994, 1032–1057, 1058–1087, 1088–1112, and 1113–1138; these read WTNV…LKDL, LAGC…DLRW, GLDI…DLSH, CPLL…HLAG, CKGV…DLHG, and CKQV…CLSD.

This sequence belongs to the JHDM1 histone demethylase family. The cofactor is Fe(2+).

Its subcellular location is the nucleus. The protein localises to the nucleoplasm. The catalysed reaction is N(6),N(6)-dimethyl-L-lysyl(36)-[histone H3] + 2 2-oxoglutarate + 2 O2 = L-lysyl(36)-[histone H3] + 2 formaldehyde + 2 succinate + 2 CO2. In terms of biological role, histone demethylase that specifically demethylates 'Lys-36' of histone H3, thereby playing a central role in histone code. Preferentially demethylates dimethylated H3 'Lys-36' residue while it has weak or no activity for mono- and tri-methylated H3 'Lys-36'. May also recognize and bind to some phosphorylated proteins and promote their ubiquitination and degradation. Required to maintain the heterochromatic state. Associates with centromeres and represses transcription of small non-coding RNAs that are encoded by the clusters of satellite repeats at the centromere. Required to sustain centromeric integrity and genomic stability, particularly during mitosis. May play a role in the regulation of circadian gene expression. The chain is Lysine-specific demethylase 2A (kdm2a) from Xenopus tropicalis (Western clawed frog).